Consider the following 324-residue polypeptide: PGR5-like protein 1A, chloroplastic (324 aa).

Residues 1 to 60 constitute a chloroplast transit peptide; sequence MGSKMLFSLTSPRLFSAVSRKPSSSFSPSPPSPSSRTQWTQLSPGKSISLRRRVFLLPAK. Residues 16 to 42 form a disordered region; the sequence is SAVSRKPSSSFSPSPPSPSSRTQWTQL. Residues 61-198 are Stromal-facing; sequence ATTEQSGPVG…KVYSDLAVDY (138 aa). C82 and C183 are disulfide-bonded. The chain crosses the membrane as a helical span at residues 199–219; that stretch reads FKMLLLNVPATVVALGLFFFL. Over 220–236 the chain is Lumenal, thylakoid; sequence DDITGFEITYIMELPEP. Residues 237-257 form a helical membrane-spanning segment; it reads YSFIFTWFAAVPVIVYLALSI. The Stromal segment spans residues 258–324; that stretch reads TKLIIKDFLI…LITLPEGSQA (67 aa).

Belongs to the PGR5 family. As to quaternary structure, homodimer and heterodimer with PGR5. Interacts with PGR5, FD2, petC, psaD1, LFNR1 and LFNR2. Also interacts with a Fe-containing cofactor (FCC). Post-translationally, disulfide bonds; Cys-300 and Cys-303 are probably involved in the formation of disulfide bridges with 'Cys-11' and 'Cys-105' of PGR5 while Cys-272 and Cys-275 are probably involved in the binding of a Fe-containing cofactor (FCC).

The protein resides in the plastid. It is found in the chloroplast thylakoid membrane. Inhibited by antimycin A. In terms of biological role, ferredoxin-plastoquinone reductase involved in cyclic electron flow (CEF) around photosystem I. The homodimer is probably not involved in CEF. In Arabidopsis thaliana (Mouse-ear cress), this protein is PGR5-like protein 1A, chloroplastic (PGRL1A).